A 1872-amino-acid chain; its full sequence is Plexin-A3 (1872 aa).

The N-terminal stretch at 1-19 is a signal peptide; it reads MHTVCLLPLLFFTIGGCLG. One can recognise a Sema domain in the interval 20–489; that stretch reads SSRPFRTFVV…SEKQVSQLPV (470 aa). The Extracellular portion of the chain corresponds to 20–1220; the sequence is SSRPFRTFVV…ITADRALTLP (1201 aa). N60 carries N-linked (GlcNAc...) asparagine glycosylation. Disulfide bonds link C78-C87, C113-C121, C267-C388, C283-C339, C357-C376, C492-C509, C498-C540, C501-C518, and C512-C524. N549 carries an N-linked (GlcNAc...) asparagine glycan. C575 and C595 form a disulfide bridge. 4 IPT/TIG domains span residues 841-934, 936-1021, 1024-1123, and 1126-1212; these read PRIT…YSFV, PTLD…YTYT, PTVT…FTYY, and PSFE…LHIT. A glycan (N-linked (GlcNAc...) asparagine) is linked at N1163. The helical transmembrane segment at 1221–1241 threads the bilayer; the sequence is AMVGLAAGGGLLLLAITVVLV. Residues 1240 to 1294 are a coiled coil; the sequence is LVAYKRKTQDADRTLKRLQLQMDNLESRVALECKEAFAELQTDINELTNHMDGVQ. Over 1242-1872 the chain is Cytoplasmic; sequence AYKRKTQDAD…QIITLVSSSS (631 aa). S1597 carries the phosphoserine modification.

It belongs to the plexin family.

The protein resides in the cell membrane. Coreceptor for SEMA3A and SEMA3F. Necessary for signaling by class 3 semaphorins and subsequent remodeling of the cytoskeleton. Plays a role in axon guidance in the developing nervous system. Regulates the migration of sympathetic neurons, but not of neural crest precursors. Required for normal dendrite spine morphology in pyramidal neurons. May play a role in regulating semaphorin-mediated programmed cell death in the developing nervous system. Class 3 semaphorins bind to a complex composed of a neuropilin and a plexin. The plexin modulates the affinity of the complex for specific semaphorins, and its cytoplasmic domain is required for the activation of down-stream signaling events in the cytoplasm. This is Plexin-A3 (Plxna3) from Rattus norvegicus (Rat).